Reading from the N-terminus, the 224-residue chain is 2-C-methyl-D-erythritol 4-phosphate cytidylyltransferase (224 aa).

The protein belongs to the IspD/TarI cytidylyltransferase family. IspD subfamily.

The enzyme catalyses 2-C-methyl-D-erythritol 4-phosphate + CTP + H(+) = 4-CDP-2-C-methyl-D-erythritol + diphosphate. It participates in isoprenoid biosynthesis; isopentenyl diphosphate biosynthesis via DXP pathway; isopentenyl diphosphate from 1-deoxy-D-xylulose 5-phosphate: step 2/6. Catalyzes the formation of 4-diphosphocytidyl-2-C-methyl-D-erythritol from CTP and 2-C-methyl-D-erythritol 4-phosphate (MEP). The protein is 2-C-methyl-D-erythritol 4-phosphate cytidylyltransferase of Clostridium botulinum (strain Eklund 17B / Type B).